The following is a 181-amino-acid chain: Inorganic pyrophosphatase 2 (181 aa).

The substrate site is built by Lys-30, Arg-44, and Tyr-56. Asp-66, Asp-71, and Asp-103 together coordinate Mg(2+). Position 142 (Tyr-142) interacts with substrate.

The protein belongs to the PPase family. As to quaternary structure, homohexamer. Requires Mg(2+) as cofactor.

It localises to the cytoplasm. The enzyme catalyses diphosphate + H2O = 2 phosphate + H(+). Functionally, catalyzes the hydrolysis of inorganic pyrophosphate (PPi) forming two phosphate ions. This chain is Inorganic pyrophosphatase 2, found in Pseudomonas syringae pv. tomato (strain ATCC BAA-871 / DC3000).